A 730-amino-acid polypeptide reads, in one-letter code: Protein folded gastrulation (730 aa).

The N-terminal stretch at 1–21 (MSPPNCLLAVLALTVFIGANN) is a signal peptide. Asparagine 51 and asparagine 193 each carry an N-linked (GlcNAc...) asparagine glycan. A compositionally biased stretch (low complexity) spans 197–211 (TPETSTSITPTSTTT). Residues 197 to 222 (TPETSTSITPTSTTTFAVPSVPSGEA) are disordered. Residues asparagine 252 and asparagine 289 are each glycosylated (N-linked (GlcNAc...) asparagine). The segment covering 361-385 (ELEEEVGEEEVTATDILPSEEDEYT) has biased composition (acidic residues). A disordered region spans residues 361–424 (ELEEEVGEEE…SPHPPEEPEI (64 aa)). The segment covering 386–415 (TETATTTGDTTVAEASMDTSTATSTSGQSS) has biased composition (low complexity). The N-linked (GlcNAc...) asparagine glycan is linked to asparagine 459. Disordered regions lie at residues 474–526 (EDES…GGHK) and 545–583 (KGKQRQQHQPQKQQLEPTSTEITSALTSTSTEDATTTTT). The segment covering 478–491 (STTTATPEPSSSTP) has biased composition (low complexity). A compositionally biased stretch (polar residues) spans 504-513 (DNDNLMTNTI). The span at 567–583 (TSALTSTSTEDATTTTT) shows a compositional bias: low complexity. Residues asparagine 590 and asparagine 639 are each glycosylated (N-linked (GlcNAc...) asparagine). A compositionally biased stretch (low complexity) spans 663 to 676 (SAASTESAGTAATT). Residues 663–683 (SAASTESAGTAATTPNSSSNP) are disordered. Asparagine 678 carries an N-linked (GlcNAc...) asparagine glycan.

Post-translationally, may be highly O-glycosylated in its Ser/Thr-rich C-terminal part. As to expression, expressed in the invagination primordia in a pattern that precisely precedes the pattern of constrictions.

It localises to the secreted. It is found in the extracellular space. Its subcellular location is the extracellular matrix. Functionally, coordinates cell shape changes during formation of the ventral furrow and invagination of the posterior midgut primordium, by inducing apical constriction of cells in spatially and temporally defined manners. Could function as a secreted signal to initiate apical constriction by acting as a ligand for an unidentified G protein-coupled receptor, which in turn activates the G protein alpha subunit encoded by concertina, in neighboring cells. Such an intracellular pathway would ultimately induce contraction of the apical actin-myosin network. In the ventral furrow, fog appears to ensure that all the cells initiate constriction within several minutes of each other. In the posterior midgut invagination, fog appears to direct the ordered progression of constriction initiations out from a central region and also to delimit the peripheral extent of this spreading. This is Protein folded gastrulation (fog) from Drosophila melanogaster (Fruit fly).